Here is a 614-residue protein sequence, read N- to C-terminus: NADH-quinone oxidoreductase subunit L (614 aa).

15 consecutive transmembrane segments (helical) span residues 1–21 (MSIIFFIILFPLIGFLFLSTI), 33–53 (IGIFSIFISFFITCFYGVSIL), 79–99 (FFLDGLSLSMLFVITGVGLLI), 136–156 (FLFMYLGWEGVSVCSYLLIGF), 168–188 (FKAFILTRVSDVFLMIGMFLI), 207–227 (LNVENFYYLDYITLFLLLGVI), 247–267 (TPVSALIHAATMVTAGVYLIA), 271–291 (FLFLLTPGILYLVGLIGTLTI), 327–347 (AWSAAITHLIMHAIFKALLFL), 372–392 (LPFLYISFIVGGASLVSFPLI), 410–430 (GCIDFFIIGLFCSFLTAIYTF), 455–475 (IPLFVLLLLSTVFGSYISPPL), 492–512 (FEIICSILSLSGIYLSYYIWI), 533–553 (FFLKGWGFNWFYKISFVYFYL), and 593–613 (YVASMILGINFIFLLMLFFYF).

This sequence belongs to the complex I subunit 5 family. As to quaternary structure, composed of 13 different subunits. Subunits NuoA, H, J, K, L, M, N constitute the membrane sector of the complex.

Its subcellular location is the cell membrane. It carries out the reaction a quinone + NADH + 5 H(+)(in) = a quinol + NAD(+) + 4 H(+)(out). NDH-1 shuttles electrons from NADH, via FMN and iron-sulfur (Fe-S) centers, to quinones in the respiratory chain. Couples the redox reaction to proton translocation (for every two electrons transferred, four hydrogen ions are translocated across the cytoplasmic membrane), and thus conserves the redox energy in a proton gradient. The polypeptide is NADH-quinone oxidoreductase subunit L (nuoL) (Buchnera aphidicola subsp. Acyrthosiphon pisum (strain APS) (Acyrthosiphon pisum symbiotic bacterium)).